The chain runs to 436 residues: Trigger factor (436 aa).

A PPIase FKBP-type domain is found at 161 to 246 (EDQLNIDFVG…VNTVSEPKLP (86 aa)).

This sequence belongs to the FKBP-type PPIase family. Tig subfamily.

The protein resides in the cytoplasm. It catalyses the reaction [protein]-peptidylproline (omega=180) = [protein]-peptidylproline (omega=0). Its function is as follows. Involved in protein export. Acts as a chaperone by maintaining the newly synthesized protein in an open conformation. Functions as a peptidyl-prolyl cis-trans isomerase. This chain is Trigger factor, found in Pseudomonas fluorescens (strain Pf0-1).